We begin with the raw amino-acid sequence, 108 residues long: Nucleoid-associated protein HEAR1046 (108 aa).

Positions 86-108 (TSQEKMAGATAGMPMPPGFKMPF) are disordered. Pro residues predominate over residues 99 to 108 (PMPPGFKMPF).

The protein belongs to the YbaB/EbfC family. As to quaternary structure, homodimer.

The protein localises to the cytoplasm. Its subcellular location is the nucleoid. In terms of biological role, binds to DNA and alters its conformation. May be involved in regulation of gene expression, nucleoid organization and DNA protection. The sequence is that of Nucleoid-associated protein HEAR1046 from Herminiimonas arsenicoxydans.